The following is a 183-amino-acid chain: Ankyrin repeat domain-containing protein 39 (183 aa).

ANK repeat units follow at residues 30 to 59 (DFER…DPSQ), 63 to 92 (AGYT…KCDA), 96 to 125 (GGAT…NPRV), and 129 to 158 (DGMT…ALKA). Phosphoserine is present on Ser-153.

This sequence belongs to the ANKRD39 family.

The polypeptide is Ankyrin repeat domain-containing protein 39 (ANKRD39) (Homo sapiens (Human)).